A 218-amino-acid polypeptide reads, in one-letter code: 5-oxoprolinase subunit B (218 aa).

Belongs to the PxpB family. Forms a complex composed of PxpA, PxpB and PxpC.

The enzyme catalyses 5-oxo-L-proline + ATP + 2 H2O = L-glutamate + ADP + phosphate + H(+). Catalyzes the cleavage of 5-oxoproline to form L-glutamate coupled to the hydrolysis of ATP to ADP and inorganic phosphate. The chain is 5-oxoprolinase subunit B from Escherichia coli O157:H7.